We begin with the raw amino-acid sequence, 304 residues long: UDP-3-O-acyl-N-acetylglucosamine deacetylase (304 aa).

His-79, His-238, and Asp-242 together coordinate Zn(2+). Catalysis depends on His-265, which acts as the Proton donor.

It belongs to the LpxC family. Requires Zn(2+) as cofactor.

It catalyses the reaction a UDP-3-O-[(3R)-3-hydroxyacyl]-N-acetyl-alpha-D-glucosamine + H2O = a UDP-3-O-[(3R)-3-hydroxyacyl]-alpha-D-glucosamine + acetate. The protein operates within glycolipid biosynthesis; lipid IV(A) biosynthesis; lipid IV(A) from (3R)-3-hydroxytetradecanoyl-[acyl-carrier-protein] and UDP-N-acetyl-alpha-D-glucosamine: step 2/6. In terms of biological role, catalyzes the hydrolysis of UDP-3-O-myristoyl-N-acetylglucosamine to form UDP-3-O-myristoylglucosamine and acetate, the committed step in lipid A biosynthesis. This Chromobacterium violaceum (strain ATCC 12472 / DSM 30191 / JCM 1249 / CCUG 213 / NBRC 12614 / NCIMB 9131 / NCTC 9757 / MK) protein is UDP-3-O-acyl-N-acetylglucosamine deacetylase.